We begin with the raw amino-acid sequence, 354 residues long: Chorismate synthase (354 aa).

NADP(+) contacts are provided by Arg48 and Arg54. FMN-binding positions include 125–127 (RSS), 238–239 (NA), Gly278, 293–297 (KPTSS), and Arg319.

It belongs to the chorismate synthase family. As to quaternary structure, homotetramer. It depends on FMNH2 as a cofactor.

The catalysed reaction is 5-O-(1-carboxyvinyl)-3-phosphoshikimate = chorismate + phosphate. It participates in metabolic intermediate biosynthesis; chorismate biosynthesis; chorismate from D-erythrose 4-phosphate and phosphoenolpyruvate: step 7/7. Its function is as follows. Catalyzes the anti-1,4-elimination of the C-3 phosphate and the C-6 proR hydrogen from 5-enolpyruvylshikimate-3-phosphate (EPSP) to yield chorismate, which is the branch point compound that serves as the starting substrate for the three terminal pathways of aromatic amino acid biosynthesis. This reaction introduces a second double bond into the aromatic ring system. In Buchnera aphidicola subsp. Acyrthosiphon pisum (strain 5A), this protein is Chorismate synthase.